Here is a 420-residue protein sequence, read N- to C-terminus: UDP-N-acetylglucosamine 1-carboxyvinyltransferase (420 aa).

A phosphoenolpyruvate-binding site is contributed by 22-23 (KN). Arginine 95 contributes to the UDP-N-acetyl-alpha-D-glucosamine binding site. Cysteine 119 functions as the Proton donor in the catalytic mechanism. At cysteine 119 the chain carries 2-(S-cysteinyl)pyruvic acid O-phosphothioketal. UDP-N-acetyl-alpha-D-glucosamine-binding positions include 124–128 (RPIDQ), aspartate 307, and isoleucine 329.

The protein belongs to the EPSP synthase family. MurA subfamily.

Its subcellular location is the cytoplasm. The catalysed reaction is phosphoenolpyruvate + UDP-N-acetyl-alpha-D-glucosamine = UDP-N-acetyl-3-O-(1-carboxyvinyl)-alpha-D-glucosamine + phosphate. The protein operates within cell wall biogenesis; peptidoglycan biosynthesis. Its function is as follows. Cell wall formation. Adds enolpyruvyl to UDP-N-acetylglucosamine. This Myxococcus xanthus (strain DK1622) protein is UDP-N-acetylglucosamine 1-carboxyvinyltransferase.